We begin with the raw amino-acid sequence, 689 residues long: Beta-adrenergic receptor kinase 1 (689 aa).

Residues 1 to 190 (MADLEAVLAD…ELNIHLTMND (190 aa)) are N-terminal. The RGS domain occupies 54-175 (TFEKIFSQKL…IESEKFTRFC (122 aa)). The Protein kinase domain occupies 191 to 453 (FSVHRIIGRG…AQEVKEDPFF (263 aa)). Residues 197–205 (IGRGGFGEV) and Lys220 each bind ATP. The active-site Proton acceptor is the Asp317. Positions 454–521 (KAVDWQMVLL…TISERWQQEV (68 aa)) constitute an AGC-kinase C-terminal domain. Residues 558-652 (DCIMHGYMSK…WKKELRDVYR (95 aa)) enclose the PH domain. The segment at 665–689 (KNKPRSPVVELSKMPLTQRGSANGL) is disordered. Ser670 bears the Phosphoserine mark.

Belongs to the protein kinase superfamily. AGC Ser/Thr protein kinase family. GPRK subfamily. Interacts with the heterodimer formed by GNB1 and GNG2. Interacts with GIT1. Interacts with, and phosphorylates chemokine-stimulated CCR5. Interacts with ARRB1. Interacts with LPAR1 and LPAR2. Interacts with RALA in response to LPAR1 activation. ADRBK1 and RALA mutually inhibit each other's binding to LPAR1. Interacts with ADRB2.

The protein localises to the cytoplasm. It localises to the cell membrane. Its subcellular location is the postsynapse. It is found in the presynapse. The catalysed reaction is [beta-adrenergic receptor] + ATP = [beta-adrenergic receptor]-phosphate + ADP + H(+). With respect to regulation, in contrast to other AGC family kinases, the catalytic activity is solely regulated by the binding of substrates and ligands, not by phosphorylation of the kinase domain. In terms of biological role, specifically phosphorylates the agonist-occupied form of the beta-adrenergic and closely related receptors, probably inducing a desensitization of them. Does not act on HTR1B/5-hydroxytryptamine 1B receptor. Key regulator of LPAR1 signaling. Competes with RALA for binding to LPAR1 thus affecting the signaling properties of the receptor. Desensitizes LPAR1 and LPAR2 in a phosphorylation-independent manner. Inhibits relaxation of airway smooth muscle in response to blue light. The sequence is that of Beta-adrenergic receptor kinase 1 from Didelphis virginiana (North American opossum).